A 286-amino-acid chain; its full sequence is 33 kDa chaperonin (286 aa).

2 disulfides stabilise this stretch: Cys-225–Cys-227 and Cys-258–Cys-261.

This sequence belongs to the HSP33 family. Post-translationally, under oxidizing conditions two disulfide bonds are formed involving the reactive cysteines. Under reducing conditions zinc is bound to the reactive cysteines and the protein is inactive.

It localises to the cytoplasm. Functionally, redox regulated molecular chaperone. Protects both thermally unfolding and oxidatively damaged proteins from irreversible aggregation. Plays an important role in the bacterial defense system toward oxidative stress. The sequence is that of 33 kDa chaperonin from Shewanella loihica (strain ATCC BAA-1088 / PV-4).